A 197-amino-acid chain; its full sequence is Dephospho-CoA kinase (197 aa).

In terms of domain architecture, DPCK spans 2-197; it reads IIGITGGIAS…SALLLLANPR (196 aa). Position 10 to 15 (10 to 15) interacts with ATP; it reads ASGKST.

This sequence belongs to the CoaE family.

Its subcellular location is the cytoplasm. The enzyme catalyses 3'-dephospho-CoA + ATP = ADP + CoA + H(+). It participates in cofactor biosynthesis; coenzyme A biosynthesis; CoA from (R)-pantothenate: step 5/5. Functionally, catalyzes the phosphorylation of the 3'-hydroxyl group of dephosphocoenzyme A to form coenzyme A. This chain is Dephospho-CoA kinase, found in Streptococcus pyogenes serotype M1.